The following is a 197-amino-acid chain: Rac-like GTP-binding protein RAC1 (197 aa).

13–20 (GDGAVGKT) is a GTP binding site. An Effector region motif is present at residues 35-43 (YVPTVFDNF). GTP is bound by residues 60 to 64 (DTAGQ) and 118 to 121 (TKLD). Cys194 is modified (cysteine methyl ester). Cys194 carries the S-geranylgeranyl cysteine lipid modification. The propeptide at 195–197 (SIL) is removed in mature form.

It belongs to the small GTPase superfamily. Rho family.

It localises to the cytoplasm. The protein localises to the membrane. Its function is as follows. Inactive GDP-bound Rho GTPases reside in the cytosol, are found in a complex with Rho GDP-dissociation inhibitors (Rho GDIs), and are released from the GDI protein in order to translocate to membranes upon activation. The sequence is that of Rac-like GTP-binding protein RAC1 (RAC1) from Lotus japonicus (Lotus corniculatus var. japonicus).